The following is a 1564-amino-acid chain: Nucleoporin nup184 (1564 aa).

It localises to the nucleus. The protein localises to the nuclear pore complex. Interacts with pom152 in the core structure of the nuclear pore complex (NPC). Involved in the export of mRNA. The protein is Nucleoporin nup184 (nup184) of Schizosaccharomyces pombe (strain 972 / ATCC 24843) (Fission yeast).